Here is a 142-residue protein sequence, read N- to C-terminus: Galectin-10 (142 aa).

Position 2 is an N-acetylserine (Ser2). A Galectin domain is found at 6 to 138 (VPYTEAASLS…DISLTKFNVS (133 aa)).

In terms of assembly, interacts with CEL. Expressed abundantly in the bone marrow. Expressed exclusively by eosinophils and basophils. Not detected in monocytes and neutrophils. Expressed in CD25-positive regulatory T-cells (Treg) (at protein level). Found in intestinal tissue from patients with Celiac disease, expression is directly related to the histological grade of mucosal damage and to the number of eosinophils found in the duodenal lesion (at protein level). Found in sputum of patients with eosinophilic inflammatory diseases such as asthma (at protein level).

The protein localises to the cytoplasm. The protein resides in the cytosol. Its subcellular location is the cytoplasmic granule. In terms of biological role, regulates immune responses through the recognition of cell-surface glycans. Essential for the anergy and suppressive function of CD25-positive regulatory T-cells (Treg). The sequence is that of Galectin-10 (CLC) from Homo sapiens (Human).